The chain runs to 396 residues: Phosphoglycerate kinase (396 aa).

Substrate is bound by residues 21–23 (DFN), arginine 36, 59–62 (HLGR), arginine 119, and arginine 156. ATP-binding positions include lysine 207, glutamate 325, and 352–355 (GGDS).

The protein belongs to the phosphoglycerate kinase family. In terms of assembly, monomer.

The protein resides in the cytoplasm. The catalysed reaction is (2R)-3-phosphoglycerate + ATP = (2R)-3-phospho-glyceroyl phosphate + ADP. It participates in carbohydrate degradation; glycolysis; pyruvate from D-glyceraldehyde 3-phosphate: step 2/5. This Lacticaseibacillus casei (strain BL23) (Lactobacillus casei) protein is Phosphoglycerate kinase.